The following is a 362-amino-acid chain: L-arginine:L-lysine amidinotransferase (362 aa).

Active-site residues include aspartate 195 and histidine 244. Cysteine 346 serves as the catalytic Amidino-cysteine intermediate.

The protein belongs to the amidinotransferase family.

The catalysed reaction is L-lysine + L-arginine = L-homoarginine + L-ornithine. It carries out the reaction L-canavanine + L-ornithine = L-canaline + L-arginine + H(+). In terms of biological role, involved in the biosynthesis of phaseolotoxin, a nonhost-specific toxin which is a key component in the development of the halo blight disease of beans. Catalyzes the transfer of an amidino group from arginine to lysine to produce one molecule of homoarginine and one molecule of ornithine, both being precursors in the biosynthesis of phaseolotoxin. Can also use L-canavanine as an alternative amidine donor with L-ornithine as amidine acceptor. This Pseudomonas savastanoi pv. phaseolicola (Pseudomonas syringae pv. phaseolicola) protein is L-arginine:L-lysine amidinotransferase.